Here is a 596-residue protein sequence, read N- to C-terminus: Probable tripeptidyl-peptidase SED2 (596 aa).

An N-terminal signal peptide occupies residues 1 to 16; sequence MRLLKFVCLLASVAAA. A propeptide spans 17 to 203 (removed in mature form); that stretch reads KPTPGASHKV…LESMSVEEFA (187 aa). Residues 210-596 form the Peptidase S53 domain; sequence LVTTACLREL…NFQALTKVLP (387 aa). Asn265 is a glycosylation site (N-linked (GlcNAc...) asparagine). Active-site charge relay system residues include Glu286 and Asp290. Asn403 carries N-linked (GlcNAc...) asparagine glycosylation. Catalysis depends on Ser501, which acts as the Charge relay system. 2 residues coordinate Ca(2+): Asp543 and Ile544. The N-linked (GlcNAc...) asparagine glycan is linked to Asn572. Ca(2+) is bound by residues Gly576 and Asp578.

The cofactor is Ca(2+).

The protein localises to the secreted. It is found in the extracellular space. The enzyme catalyses Release of an N-terminal tripeptide from a polypeptide.. Functionally, secreted tripeptidyl-peptidase which degrades proteins at acidic pHs and is involved in virulence. This chain is Probable tripeptidyl-peptidase SED2 (SED2), found in Arthroderma benhamiae (strain ATCC MYA-4681 / CBS 112371) (Trichophyton mentagrophytes).